The primary structure comprises 411 residues: Putative metal tolerance protein C3 (411 aa).

Topologically, residues 1–115 (MEVNYCPETP…DRAERAAQEL (115 aa)) are cytoplasmic. Residues 116–136 (AMQISNWANIFLLALKIYATV) traverse the membrane as a helical segment. The Vacuolar portion of the chain corresponds to 137–140 (KSGS). Residues 141–161 (IAIAASTLDSLLDLMAGGILW) form a helical membrane-spanning segment. Residues 162–184 (FTHLSMKNVNIYKYPIGKLRVQP) are Cytoplasmic-facing. Residues 185–205 (VGIIIFAAVMATLGFQVLLVA) traverse the membrane as a helical segment. Residues 206-222 (AEQLISNEPSEKMNHVQ) lie on the Vacuolar side of the membrane. The chain crosses the membrane as a helical span at residues 223-243 (LIWLYSIMLSATAIKLVLWIY). Over 244–262 (CKSSRNHIVRAYAKDHHFD) the chain is Cytoplasmic. Residues 263 to 283 (VVTNVLGLVAAVLANAFYWWL) traverse the membrane as a helical segment. At 284-287 (DPTG) the chain is on the vacuolar side. The helical transmembrane segment at 288–308 (AILLAIYTIVNWSGTVMENAV) threads the bilayer. Residues 309–390 (SLIGQSAPPE…LPEVERAFVH (82 aa)) are Cytoplasmic-facing.

The protein belongs to the cation diffusion facilitator (CDF) transporter (TC 2.A.4) family.

It localises to the vacuole membrane. Its function is as follows. Involved in sequestration of excess metal in the cytoplasm into vacuoles to maintain metal homeostasis. The sequence is that of Putative metal tolerance protein C3 (MTPC3) from Arabidopsis thaliana (Mouse-ear cress).